Consider the following 203-residue polypeptide: GTP-binding protein YPTC1 (203 aa).

GTP-binding positions include 15 to 23 (GDSGVGKSC), 33 to 40 (YTESYIST), 63 to 67 (DTAGQ), 121 to 124 (NKSD), and 151 to 153 (SAK). Residues 37-45 (YISTIGVDF) carry the Effector region motif. Residues 174–203 (ASQPIPTKAGGPVVRPQEGKPINSKSSSCC) are disordered. S-geranylgeranyl cysteine attachment occurs at residues Cys202 and Cys203.

The protein belongs to the small GTPase superfamily. Rab family.

It is found in the cell membrane. In terms of biological role, protein transport. Probably involved in vesicular traffic. In Chlamydomonas reinhardtii (Chlamydomonas smithii), this protein is GTP-binding protein YPTC1 (YPTC1).